The chain runs to 126 residues: Large ribosomal subunit protein eL28 (126 aa).

Ser-2 bears the N-acetylserine mark.

Belongs to the eukaryotic ribosomal protein eL28 family.

The polypeptide is Large ribosomal subunit protein eL28 (rpl-28) (Caenorhabditis elegans).